A 374-amino-acid polypeptide reads, in one-letter code: 2-oxoglutarate-Fe(II) type oxidoreductase ppzC (374 aa).

The segment at lysine 111–threonine 130 is disordered. The 111-residue stretch at tyrosine 220 to phenylalanine 330 folds into the Fe2OG dioxygenase domain. Fe cation contacts are provided by histidine 254, aspartate 256, and histidine 311. A 2-oxoglutarate-binding site is contributed by arginine 321.

It belongs to the iron/ascorbate-dependent oxidoreductase family. Requires Fe(2+) as cofactor.

It carries out the reaction peramine + 2-oxoglutarate + O2 = 8-hydroxyperamine + succinate + CO2. Its pathway is secondary metabolite biosynthesis. Functionally, 2-oxoglutarate-Fe(II) type oxidoreductase; part of the gene cluster that mediates the biosynthesis of pyrrolopyrazines, secondary metabolites showing insecticidal activity. Within the pathway, ppzC uses peramine as substrate for hydroxylation to yield the novel analog 8-hydroxyperamine. The single multifunctional NRPS ppzA is sufficient to produce peramine via condensation of 1-pyrroline-5-carboxylate and arginine, N-methylation of the alpha-amino group of arginine and reduction of the thioester and the cyclization to form an iminium ion resulting in release from the peptide synthetase. Deprotonation of this intermediate and oxidation of the pyrroline ring would give rise to peramine. In Epichloe species that produce only peramine, the peramine synthetase gene is not localized in a gene cluster, in contrast to Metarhizium species that contain additional pyrrolopyrazine biosynthesis genes. The 2-oxoglutarate-Fe(II) type oxidoreductase ppzC hydroxylates peramine to yield the newly identified compound 8-hydroxyperamine whereas ppzD converts L-proline into trans-4-hydroxy-L-proline, a precursor of peramine biosynthesis. This chain is 2-oxoglutarate-Fe(II) type oxidoreductase ppzC, found in Metarhizium rileyi (strain RCEF 4871) (Nomuraea rileyi).